The following is a 331-amino-acid chain: Geranylgeranyl transferase type-2 subunit beta (331 aa).

Residue G2 is modified to N-acetylglycine. T3 is subject to Phosphothreonine. 6 PFTB repeats span residues 20–61 (LEKH…DLMG), 68–109 (REEI…TLYD), 116–157 (INKV…ALLG), 164–205 (VEKA…AITS), 212–253 (SDLL…KIIG), and 260–302 (REKL…SLLG). 190 to 192 (HAG) contacts geranylgeranyl diphosphate. The Zn(2+) site is built by D238 and C240. A geranylgeranyl diphosphate-binding site is contributed by 241–244 (YSWW). H290 lines the Zn(2+) pocket.

It belongs to the protein prenyltransferase subunit beta family. As to quaternary structure, heterotrimer composed of RABGGTA, RABGGTB and CHM; within this trimer, RABGGTA and RABGGTB form the catalytic component B, while CHM (component A) mediates peptide substrate binding. The Rab GGTase dimer (RGGT) interacts with CHM (component A) prior to Rab protein binding; the association is stabilized by geranylgeranyl pyrophosphate (GGpp). The CHM:RGGT:Rab complex is destabilized by GGpp. Interaction of RABGGTB with prenylated PTP4A2 precludes its association with RABGGTA and inhibits enzyme activity. Interacts with CHODL. Interacts with non-phosphorylated form of RAB8A; phosphorylation of RAB8A at 'Thr-72' disrupts this interaction. It depends on Zn(2+) as a cofactor.

The catalysed reaction is geranylgeranyl diphosphate + L-cysteinyl-[protein] = S-geranylgeranyl-L-cysteinyl-[protein] + diphosphate. With respect to regulation, the enzymatic reaction requires the aid of a Rab escort protein (also called component A). In terms of biological role, catalyzes the transfer of a geranylgeranyl moiety from geranylgeranyl diphosphate to both cysteines of Rab proteins with the C-terminal sequence -XXCC, -XCXC and -CCXX, such as RAB1A, RAB3A, RAB5A and RAB7A. This Bos taurus (Bovine) protein is Geranylgeranyl transferase type-2 subunit beta (RABGGTB).